Here is a 262-residue protein sequence, read N- to C-terminus: Indole-3-glycerol phosphate synthase (262 aa).

It belongs to the TrpC family.

The catalysed reaction is 1-(2-carboxyphenylamino)-1-deoxy-D-ribulose 5-phosphate + H(+) = (1S,2R)-1-C-(indol-3-yl)glycerol 3-phosphate + CO2 + H2O. Its pathway is amino-acid biosynthesis; L-tryptophan biosynthesis; L-tryptophan from chorismate: step 4/5. The protein is Indole-3-glycerol phosphate synthase of Leuconostoc mesenteroides subsp. mesenteroides (strain ATCC 8293 / DSM 20343 / BCRC 11652 / CCM 1803 / JCM 6124 / NCDO 523 / NBRC 100496 / NCIMB 8023 / NCTC 12954 / NRRL B-1118 / 37Y).